The chain runs to 891 residues: Alanine--tRNA ligase (891 aa).

Residues His-564, His-568, Cys-681, and His-685 each coordinate Zn(2+).

It belongs to the class-II aminoacyl-tRNA synthetase family. It depends on Zn(2+) as a cofactor.

The protein localises to the cytoplasm. The enzyme catalyses tRNA(Ala) + L-alanine + ATP = L-alanyl-tRNA(Ala) + AMP + diphosphate. Functionally, catalyzes the attachment of alanine to tRNA(Ala) in a two-step reaction: alanine is first activated by ATP to form Ala-AMP and then transferred to the acceptor end of tRNA(Ala). Also edits incorrectly charged Ser-tRNA(Ala) and Gly-tRNA(Ala) via its editing domain. The chain is Alanine--tRNA ligase from Methylorubrum populi (strain ATCC BAA-705 / NCIMB 13946 / BJ001) (Methylobacterium populi).